We begin with the raw amino-acid sequence, 221 residues long: Guanylate kinase (221 aa).

In terms of domain architecture, Guanylate kinase-like spans 18 to 196 (GFLFILSSPS…SASLIKSIYL (179 aa)). ATP is bound at residue 25 to 32 (SPSGAGKS).

Belongs to the guanylate kinase family.

The protein resides in the cytoplasm. The enzyme catalyses GMP + ATP = GDP + ADP. In terms of biological role, essential for recycling GMP and indirectly, cGMP. The chain is Guanylate kinase from Bartonella quintana (strain Toulouse) (Rochalimaea quintana).